The following is a 382-amino-acid chain: ATP phosphoribosyltransferase regulatory subunit (382 aa).

The protein belongs to the class-II aminoacyl-tRNA synthetase family. HisZ subfamily. As to quaternary structure, heteromultimer composed of HisG and HisZ subunits.

The protein localises to the cytoplasm. Its pathway is amino-acid biosynthesis; L-histidine biosynthesis; L-histidine from 5-phospho-alpha-D-ribose 1-diphosphate: step 1/9. Its function is as follows. Required for the first step of histidine biosynthesis. May allow the feedback regulation of ATP phosphoribosyltransferase activity by histidine. The polypeptide is ATP phosphoribosyltransferase regulatory subunit (Burkholderia thailandensis (strain ATCC 700388 / DSM 13276 / CCUG 48851 / CIP 106301 / E264)).